A 569-amino-acid polypeptide reads, in one-letter code: Proline--tRNA ligase (569 aa).

Belongs to the class-II aminoacyl-tRNA synthetase family. ProS type 1 subfamily. As to quaternary structure, homodimer.

The protein resides in the cytoplasm. It carries out the reaction tRNA(Pro) + L-proline + ATP = L-prolyl-tRNA(Pro) + AMP + diphosphate. Functionally, catalyzes the attachment of proline to tRNA(Pro) in a two-step reaction: proline is first activated by ATP to form Pro-AMP and then transferred to the acceptor end of tRNA(Pro). As ProRS can inadvertently accommodate and process non-cognate amino acids such as alanine and cysteine, to avoid such errors it has two additional distinct editing activities against alanine. One activity is designated as 'pretransfer' editing and involves the tRNA(Pro)-independent hydrolysis of activated Ala-AMP. The other activity is designated 'posttransfer' editing and involves deacylation of mischarged Ala-tRNA(Pro). The misacylated Cys-tRNA(Pro) is not edited by ProRS. The polypeptide is Proline--tRNA ligase (Dehalococcoides mccartyi (strain CBDB1)).